Reading from the N-terminus, the 372-residue chain is L-selectin (372 aa).

The N-terminal stretch at 1–28 is a signal peptide; that stretch reads MVFPWRCEGTYWGSRNILKLWVWTLLCC. Residues 29–38 constitute a propeptide that is removed on maturation; it reads DFLIHHGTHC. The Extracellular portion of the chain corresponds to 39 to 332; sequence WTYHYSEKPM…FSKIKEGDYN (294 aa). The region spanning 55 to 155 is the C-type lectin domain; the sequence is KFCKQNYTDL…ACHKRKAALC (101 aa). Intrachain disulfides connect Cys57/Cys155, Cys128/Cys147, Cys128/Cys160, Cys160/Cys171, Cys165/Cys180, Cys182/Cys191, Cys197/Cys241, Cys227/Cys254, Cys259/Cys303, and Cys289/Cys316. N-linked (GlcNAc...) asparagine glycans are attached at residues Asn60 and Asn104. The Ca(2+) site is built by Glu118, Asn120, Glu126, Asn143, and Asp144. The region spanning 156–192 is the EGF-like domain; that stretch reads YTASCQPGSCNGRGECVETINNHTCICDAGYYGPQCQ. An N-linked (GlcNAc...) asparagine glycan is attached at Asn177. Sushi domains are found at residues 195 to 256 and 257 to 318; these read VQCE…ICQV and VQCE…ICQE. Asn216, Asn226, Asn246, Asn278, Asn288, Asn308, and Asn320 each carry an N-linked (GlcNAc...) asparagine glycan. Residues 333–355 traverse the membrane as a helical segment; that stretch reads PLFIPVAVMVTAFSGLAFLIWLA. Over 356-372 the chain is Cytoplasmic; the sequence is RRLKKGKKSQERMDDPY.

The protein belongs to the selectin/LECAM family. In terms of assembly, interaction with SELPLG/PSGL1 and PODXL2 is required for promoting recruitment and rolling of leukocytes. This interaction is dependent on the sialyl Lewis X glycan modification of SELPLG and PODXL2, and tyrosine sulfation modifications of SELPLG. Sulfation on 'Tyr-51' of SELPLG is important for L-selectin binding. Post-translationally, N-glycosylated. Predominantly expressed in lymphoid tissue.

It localises to the cell membrane. In terms of biological role, calcium-dependent lectin that mediates cell adhesion by binding to glycoproteins on neighboring cells. Mediates the adherence of lymphocytes to endothelial cells of high endothelial venules in peripheral lymph nodes. Promotes initial tethering and rolling of leukocytes in endothelia. The polypeptide is L-selectin (Sell) (Mus musculus (Mouse)).